A 210-amino-acid polypeptide reads, in one-letter code: Thymidylate kinase (210 aa).

10–17 (GIDGCGKT) contributes to the ATP binding site.

This sequence belongs to the thymidylate kinase family.

The enzyme catalyses dTMP + ATP = dTDP + ADP. Functionally, phosphorylation of dTMP to form dTDP in both de novo and salvage pathways of dTTP synthesis. This is Thymidylate kinase from Prochlorococcus marinus (strain MIT 9515).